The primary structure comprises 128 residues: Ribonuclease pancreatic B (128 aa).

The disordered stretch occupies residues Ala-1–Asn-21. Positions 7 and 10 each coordinate substrate. The active-site Proton acceptor is His-12. N-linked (GlcNAc...) asparagine glycosylation is found at Asn-21 and Asn-34. Intrachain disulfides connect Cys-26-Cys-84, Cys-40-Cys-95, Cys-58-Cys-110, and Cys-65-Cys-72. Substrate contacts are provided by residues Lys-41 to Thr-45, Lys-66, and Arg-85. His-119 functions as the Proton donor in the catalytic mechanism.

It belongs to the pancreatic ribonuclease family. In terms of tissue distribution, pancreas.

It localises to the secreted. It carries out the reaction an [RNA] containing cytidine + H2O = an [RNA]-3'-cytidine-3'-phosphate + a 5'-hydroxy-ribonucleotide-3'-[RNA].. The catalysed reaction is an [RNA] containing uridine + H2O = an [RNA]-3'-uridine-3'-phosphate + a 5'-hydroxy-ribonucleotide-3'-[RNA].. The sequence is that of Ribonuclease pancreatic B from Cavia porcellus (Guinea pig).